A 130-amino-acid polypeptide reads, in one-letter code: Large ribosomal subunit protein bL19 (130 aa).

The protein belongs to the bacterial ribosomal protein bL19 family.

This protein is located at the 30S-50S ribosomal subunit interface and may play a role in the structure and function of the aminoacyl-tRNA binding site. The protein is Large ribosomal subunit protein bL19 of Gluconobacter oxydans (strain 621H) (Gluconobacter suboxydans).